The sequence spans 1872 residues: Ral GTPase-activating protein subunit alpha-2 (1872 aa).

3 positions are modified to phosphoserine: S373, S376, and S379. Residues 446–469 (DKKDVAEEDADKLGLSETDSKEVS) show a composition bias toward basic and acidic residues. Residues 446-481 (DKKDVAEEDADKLGLSETDSKEVSSESSGHKRSSSW) are disordered. 2 positions are modified to phosphoserine: S486 and S696. Disordered regions lie at residues 711–730 (FRSA…NTVR) and 758–849 (QPVP…TGSD). T715 carries the post-translational modification Phosphothreonine; by PKB. Over residues 775-795 (SDSSQGQKVENSQNLSSSEPK) the composition is skewed to polar residues. Residues 796 to 810 (SVQESKGHVTHEHEG) are compositionally biased toward basic and acidic residues. Phosphoserine is present on residues S819 and S820. A compositionally biased stretch (basic and acidic residues) spans 824–843 (LDLKEESQQTHGRCRERQKS). S1592 carries the phosphoserine modification. The Rap-GAP domain occupies 1634-1842 (LKNLDSRQCR…EERALYLEAI (209 aa)).

Component of the heterodimeric RalGAP2 complex with RALGAPB. Heterodimerization is required for activity. Highly expressed in lung, liver, testis and thymus with lower levels in brain and heart (at protein level).

Its subcellular location is the cytoplasm. Catalytic subunit of the heterodimeric RalGAP2 complex which acts as a GTPase activator for the Ras-like small GTPases RALA and RALB. The protein is Ral GTPase-activating protein subunit alpha-2 of Rattus norvegicus (Rat).